The sequence spans 944 residues: Tyrosine-protein kinase transmembrane receptor ROR2 (944 aa).

A signal peptide spans 1–33 (MARGWVRPSRVPLCARAVWTAAALLLWTPWTAG). Residues 34-403 (EVEDSEAIDT…CSPRDGSKMG (370 aa)) lie on the Extracellular side of the membrane. An Ig-like C2-type domain is found at 55–145 (PTLKGYFLNF…VATNGLKTIT (91 aa)). N-linked (GlcNAc...) asparagine glycosylation occurs at asparagine 70. Cystine bridges form between cysteine 83–cysteine 135, cysteine 174–cysteine 239, cysteine 182–cysteine 232, cysteine 223–cysteine 264, cysteine 252–cysteine 300, cysteine 256–cysteine 286, cysteine 316–cysteine 394, cysteine 337–cysteine 377, and cysteine 365–cysteine 389. The region spanning 169–303 (QEDGFCQPYR…SPDAANCMRI (135 aa)) is the FZ domain. A glycan (N-linked (GlcNAc...) asparagine) is linked at asparagine 188. In terms of domain architecture, Kringle spans 316 to 394 (CYNGSGADYR…RVELCDVPPC (79 aa)). N-linked (GlcNAc...) asparagine glycosylation is present at asparagine 318. A helical transmembrane segment spans residues 404 to 424 (ILYILVPSIAIPLVIACLFFL). Residues 425–944 (VCMCRNKQKA…TEAAHVQLEA (520 aa)) lie on the Cytoplasmic side of the membrane. Residues 473–746 (VRFMEELGED…PRFKDIHSRL (274 aa)) enclose the Protein kinase domain. ATP-binding positions include 479 to 487 (LGEDRFGKV) and lysine 507. Aspartate 615 functions as the Proton acceptor in the catalytic mechanism. Phosphotyrosine; by autocatalysis is present on tyrosine 646. Residues 757 to 779 (SSAQTSGASNTTQTSSLSTSPVS) form a disordered region. A compositionally biased stretch (low complexity) spans 765 to 779 (SNTTQTSSLSTSPVS). Position 785 is an asymmetric dimethylarginine (arginine 785). Disordered regions lie at residues 850–879 (QVPP…TAPS) and 898–929 (QNIA…LGDN). The span at 857 to 872 (PKPSSHHSGSGSTSTG) shows a compositional bias: low complexity.

Belongs to the protein kinase superfamily. Tyr protein kinase family. ROR subfamily. In terms of assembly, homodimer; promotes osteogenesis. Binds YWHAB. Interacts with WTIP. Interacts with ROR2. It depends on Mg(2+) as a cofactor.

Its subcellular location is the cell membrane. The enzyme catalyses L-tyrosyl-[protein] + ATP = O-phospho-L-tyrosyl-[protein] + ADP + H(+). Tyrosine-protein kinase receptor which may be involved in the early formation of the chondrocytes. It seems to be required for cartilage and growth plate development. Phosphorylates YWHAB, leading to induction of osteogenesis and bone formation. In contrast, has also been shown to have very little tyrosine kinase activity in vitro. May act as a receptor for wnt ligand WNT5A which may result in the inhibition of WNT3A-mediated signaling. The chain is Tyrosine-protein kinase transmembrane receptor ROR2 (Ror2) from Mus musculus (Mouse).